Here is a 275-residue protein sequence, read N- to C-terminus: 4-diphosphocytidyl-2-C-methyl-D-erythritol kinase (275 aa).

Lys-14 is a catalytic residue. 94–104 (PMEAGLGGGSA) serves as a coordination point for ATP. Asp-134 is an active-site residue.

The protein belongs to the GHMP kinase family. IspE subfamily.

It carries out the reaction 4-CDP-2-C-methyl-D-erythritol + ATP = 4-CDP-2-C-methyl-D-erythritol 2-phosphate + ADP + H(+). It participates in isoprenoid biosynthesis; isopentenyl diphosphate biosynthesis via DXP pathway; isopentenyl diphosphate from 1-deoxy-D-xylulose 5-phosphate: step 3/6. In terms of biological role, catalyzes the phosphorylation of the position 2 hydroxy group of 4-diphosphocytidyl-2C-methyl-D-erythritol. This Thermosipho africanus (strain TCF52B) protein is 4-diphosphocytidyl-2-C-methyl-D-erythritol kinase.